Here is a 268-residue protein sequence, read N- to C-terminus: Minor capsid protein VP2 (268 aa).

Polar residues predominate over residues Ser-132–Thr-144. Residues Ser-132–Ser-199 form a disordered region. A compositionally biased stretch (low complexity) spans Asn-145–Pro-163. Over residues Thr-164 to Leu-178 the composition is skewed to polar residues. Over residues Gly-179–Ala-195 the composition is skewed to low complexity.

It belongs to the norovirus VP2 family. As to quaternary structure, homooligomer. The portal-like structure consists in 12 copies of VP2. Interacts with capsid protein VP1.

The protein localises to the virion. It is found in the host cytoplasm. Minor structural protein that forms a portal-like structure at a unique three-fold axis of symmetry, following binding to the host receptor. The channel formed by VP2 may allow the delivery of the viral genome through the host endosomal membrane. This Lordsdale virus (strain GII/Human/United Kingdom/Lordsdale/1993) (Human enteric calicivirus) protein is Minor capsid protein VP2.